The sequence spans 321 residues: Cytochrome f (321 aa).

A signal peptide spans 1–35 (MQNRNKNNWMKKWVIRSISILIILNIIAWPSISYA). Heme-binding residues include tyrosine 36, cysteine 56, cysteine 59, and histidine 60. Residues 287-306 (IQGLLLFFVSVIMAQILLVL) form a helical membrane-spanning segment.

Belongs to the cytochrome f family. The 4 large subunits of the cytochrome b6-f complex are cytochrome b6, subunit IV (17 kDa polypeptide, petD), cytochrome f and the Rieske protein, while the 4 small subunits are PetG, PetL, PetM and PetN. The complex functions as a dimer. Requires heme as cofactor.

Its subcellular location is the plastid. The protein resides in the chloroplast thylakoid membrane. Functionally, component of the cytochrome b6-f complex, which mediates electron transfer between photosystem II (PSII) and photosystem I (PSI), cyclic electron flow around PSI, and state transitions. This is Cytochrome f from Psilotum nudum (Whisk fern).